The chain runs to 346 residues: Methylthioribose-1-phosphate isomerase (346 aa).

Substrate is bound by residues 46 to 48, arginine 89, and glutamine 196; that span reads RGA. Residue aspartate 237 is the Proton donor of the active site. Residue 247–248 participates in substrate binding; that stretch reads NK.

This sequence belongs to the eIF-2B alpha/beta/delta subunits family. MtnA subfamily.

The catalysed reaction is 5-(methylsulfanyl)-alpha-D-ribose 1-phosphate = 5-(methylsulfanyl)-D-ribulose 1-phosphate. Its pathway is amino-acid biosynthesis; L-methionine biosynthesis via salvage pathway; L-methionine from S-methyl-5-thio-alpha-D-ribose 1-phosphate: step 1/6. In terms of biological role, catalyzes the interconversion of methylthioribose-1-phosphate (MTR-1-P) into methylthioribulose-1-phosphate (MTRu-1-P). This Geotalea uraniireducens (strain Rf4) (Geobacter uraniireducens) protein is Methylthioribose-1-phosphate isomerase.